The sequence spans 256 residues: Triosephosphate isomerase (256 aa).

10–12 contacts substrate; sequence NWK. Catalysis depends on His99, which acts as the Electrophile. Glu171 functions as the Proton acceptor in the catalytic mechanism. Residues Gly177, Ser216, and 237-238 contribute to the substrate site; that span reads GG.

The protein belongs to the triosephosphate isomerase family. Homodimer.

The protein resides in the cytoplasm. The enzyme catalyses D-glyceraldehyde 3-phosphate = dihydroxyacetone phosphate. The protein operates within carbohydrate biosynthesis; gluconeogenesis. It participates in carbohydrate degradation; glycolysis; D-glyceraldehyde 3-phosphate from glycerone phosphate: step 1/1. Its function is as follows. Involved in the gluconeogenesis. Catalyzes stereospecifically the conversion of dihydroxyacetone phosphate (DHAP) to D-glyceraldehyde-3-phosphate (G3P). This is Triosephosphate isomerase from Colwellia psychrerythraea (strain 34H / ATCC BAA-681) (Vibrio psychroerythus).